A 72-amino-acid chain; its full sequence is Large ribosomal subunit protein bL31 (72 aa).

Residues Cys16, Cys18, Cys37, and Cys40 each contribute to the Zn(2+) site.

Belongs to the bacterial ribosomal protein bL31 family. Type A subfamily. As to quaternary structure, part of the 50S ribosomal subunit. It depends on Zn(2+) as a cofactor.

In terms of biological role, binds the 23S rRNA. The protein is Large ribosomal subunit protein bL31 of Idiomarina loihiensis (strain ATCC BAA-735 / DSM 15497 / L2-TR).